Consider the following 264-residue polypeptide: Thymidylate synthase (264 aa).

Arg-21 contacts dUMP. His-51 contacts (6R)-5,10-methylene-5,6,7,8-tetrahydrofolate. A dUMP-binding site is contributed by 126–127 (RR). Cys-146 functions as the Nucleophile in the catalytic mechanism. Residues 166 to 169 (RSCD), Asn-177, and 207 to 209 (HLY) each bind dUMP. Asp-169 contacts (6R)-5,10-methylene-5,6,7,8-tetrahydrofolate. A (6R)-5,10-methylene-5,6,7,8-tetrahydrofolate-binding site is contributed by Ser-263.

The protein belongs to the thymidylate synthase family. Bacterial-type ThyA subfamily. Homodimer.

It is found in the cytoplasm. The catalysed reaction is dUMP + (6R)-5,10-methylene-5,6,7,8-tetrahydrofolate = 7,8-dihydrofolate + dTMP. It participates in pyrimidine metabolism; dTTP biosynthesis. Functionally, catalyzes the reductive methylation of 2'-deoxyuridine-5'-monophosphate (dUMP) to 2'-deoxythymidine-5'-monophosphate (dTMP) while utilizing 5,10-methylenetetrahydrofolate (mTHF) as the methyl donor and reductant in the reaction, yielding dihydrofolate (DHF) as a by-product. This enzymatic reaction provides an intracellular de novo source of dTMP, an essential precursor for DNA biosynthesis. The polypeptide is Thymidylate synthase (Buchnera aphidicola subsp. Acyrthosiphon pisum (strain APS) (Acyrthosiphon pisum symbiotic bacterium)).